The primary structure comprises 83 residues: Toxin TdNa3 (83 aa).

A signal peptide spans 1–20; it reads MKGMIMLISCLMLIDVVVES. Positions 21–82 constitute an LCN-type CS-alpha/beta domain; that stretch reads KNGYIIEPKG…IFDYYNNKCG (62 aa). Intrachain disulfides connect cysteine 31/cysteine 81, cysteine 35/cysteine 57, cysteine 43/cysteine 62, and cysteine 47/cysteine 64. At cysteine 81 the chain carries Cysteine amide.

Belongs to the long (4 C-C) scorpion toxin superfamily. Sodium channel inhibitor family. Beta subfamily. As to expression, expressed by the venom gland.

It is found in the secreted. Functionally, inhibits the sodium currents (Nav) in an apparent irreversible manner. Produces small depolarization and induces repetitive firing in squid axons. Is specific for arthropods (crickets, triatomides, crabs and squids), but is non-toxic to mice. The protein is Toxin TdNa3 of Tityus discrepans (Venezuelan scorpion).